A 130-amino-acid chain; its full sequence is MIGEWNNGTGRRKSSVARVFIKKGTGKITINDRDIQVFFGRETSIMICRQPLFLTNHVETFDIMVNVHGGGESGQAGAVRHGITRALIDYDATLKPALSQAGFVTRDAREVERKKVGFRSARRRKQFSKR.

Belongs to the universal ribosomal protein uS9 family.

In Polaromonas sp. (strain JS666 / ATCC BAA-500), this protein is Small ribosomal subunit protein uS9.